The chain runs to 504 residues: Putative ribose/galactose/methyl galactoside import ATP-binding protein (504 aa).

2 ABC transporter domains span residues 5 to 242 and 252 to 497; these read ISVK…GRNL and TSAN…TRRE. ATP is bound at residue 37 to 44; the sequence is GENGAGKS.

It belongs to the ABC transporter superfamily. Carbohydrate importer 2 (CUT2) (TC 3.A.1.2) family.

It is found in the cell inner membrane. The catalysed reaction is D-ribose(out) + ATP + H2O = D-ribose(in) + ADP + phosphate + H(+). The enzyme catalyses D-galactose(out) + ATP + H2O = D-galactose(in) + ADP + phosphate + H(+). Its function is as follows. Part of an ABC transporter complex involved in carbohydrate import. Could be involved in ribose, galactose and/or methyl galactoside import. Responsible for energy coupling to the transport system. The sequence is that of Putative ribose/galactose/methyl galactoside import ATP-binding protein from Albidiferax ferrireducens (strain ATCC BAA-621 / DSM 15236 / T118) (Rhodoferax ferrireducens).